Reading from the N-terminus, the 281-residue chain is Nucleoid occlusion protein (281 aa).

The tract at residues 1 to 26 is disordered; it reads MKHPFSRLFSFGEKEQEEAGGKQERE. Residues 12 to 26 show a composition bias toward basic and acidic residues; it reads GEKEQEEAGGKQERE. The H-T-H motif DNA-binding region spans 145 to 164; it reads EALAQRLGKGQSTIANKLRL.

It belongs to the ParB family.

It localises to the cytoplasm. The protein resides in the nucleoid. Functionally, effects nucleoid occlusion by binding relatively nonspecifically to DNA and preventing the assembly of the division machinery in the vicinity of the nucleoid, especially under conditions that disturb the cell cycle. It helps to coordinate cell division and chromosome segregation by preventing the formation of the Z ring through the nucleoid, which would cause chromosome breakage. This chain is Nucleoid occlusion protein, found in Geobacillus thermodenitrificans (strain NG80-2).